An 89-amino-acid chain; its full sequence is Small ribosomal subunit protein uS15 (89 aa).

The protein belongs to the universal ribosomal protein uS15 family. As to quaternary structure, part of the 30S ribosomal subunit. Forms a bridge to the 50S subunit in the 70S ribosome, contacting the 23S rRNA.

Its function is as follows. One of the primary rRNA binding proteins, it binds directly to 16S rRNA where it helps nucleate assembly of the platform of the 30S subunit by binding and bridging several RNA helices of the 16S rRNA. Forms an intersubunit bridge (bridge B4) with the 23S rRNA of the 50S subunit in the ribosome. The protein is Small ribosomal subunit protein uS15 of Arthrobacter sp. (strain FB24).